The following is a 127-amino-acid chain: Holo-[acyl-carrier-protein] synthase (127 aa).

2 residues coordinate Mg(2+): D9 and E58.

It belongs to the P-Pant transferase superfamily. AcpS family. It depends on Mg(2+) as a cofactor.

The protein localises to the cytoplasm. The catalysed reaction is apo-[ACP] + CoA = holo-[ACP] + adenosine 3',5'-bisphosphate + H(+). Transfers the 4'-phosphopantetheine moiety from coenzyme A to a Ser of acyl-carrier-protein. The sequence is that of Holo-[acyl-carrier-protein] synthase from Shewanella oneidensis (strain ATCC 700550 / JCM 31522 / CIP 106686 / LMG 19005 / NCIMB 14063 / MR-1).